Consider the following 46-residue polypeptide: Large ribosomal subunit protein bL34 (46 aa).

The protein belongs to the bacterial ribosomal protein bL34 family.

This is Large ribosomal subunit protein bL34 (rpmH) from Mycobacterium avium.